A 175-amino-acid chain; its full sequence is MALREIIILPDKRLREISKPVTEVTTEIRKLADDMFESMYEAPGIGLAAIQIAEPVRLITMDIVRKEGDGKSDPRAFINPEIVGASSEMNVYEEGCLSIPEYYAEVERPKTVRIRYTDLDGNVKEEDADGLFATCIQHEIDHLNGVLFVDHLSKLKRAMVIRKFEKAAKRGIKYV.

2 residues coordinate Fe cation: Cys-96 and His-138. Glu-139 is an active-site residue. Position 142 (His-142) interacts with Fe cation.

The protein belongs to the polypeptide deformylase family. The cofactor is Fe(2+).

It catalyses the reaction N-terminal N-formyl-L-methionyl-[peptide] + H2O = N-terminal L-methionyl-[peptide] + formate. Functionally, removes the formyl group from the N-terminal Met of newly synthesized proteins. Requires at least a dipeptide for an efficient rate of reaction. N-terminal L-methionine is a prerequisite for activity but the enzyme has broad specificity at other positions. This is Peptide deformylase from Rhodopseudomonas palustris (strain ATCC BAA-98 / CGA009).